A 285-amino-acid polypeptide reads, in one-letter code: Probable endonuclease 4 (285 aa).

His69, His109, Glu145, Asp179, His182, His216, Asp229, His231, and Glu261 together coordinate Zn(2+).

The protein belongs to the AP endonuclease 2 family. Requires Zn(2+) as cofactor.

It carries out the reaction Endonucleolytic cleavage to 5'-phosphooligonucleotide end-products.. Functionally, endonuclease IV plays a role in DNA repair. It cleaves phosphodiester bonds at apurinic or apyrimidinic (AP) sites, generating a 3'-hydroxyl group and a 5'-terminal sugar phosphate. The chain is Probable endonuclease 4 from Shigella dysenteriae serotype 1 (strain Sd197).